Here is a 306-residue protein sequence, read N- to C-terminus: D-alanine--D-alanine ligase (306 aa).

Positions 104–303 (KMLWKAFGLP…FEQLVVKILE (200 aa)) constitute an ATP-grasp domain. 134–189 (VAKLGLPLMVKPSLEGSSVGLTKVKAVEELKSAVEYALKFDNTILIEEWLAGDELT) provides a ligand contact to ATP. Mg(2+)-binding residues include D257, E270, and N272.

This sequence belongs to the D-alanine--D-alanine ligase family. Mg(2+) is required as a cofactor. The cofactor is Mn(2+).

It is found in the cytoplasm. It carries out the reaction 2 D-alanine + ATP = D-alanyl-D-alanine + ADP + phosphate + H(+). The protein operates within cell wall biogenesis; peptidoglycan biosynthesis. Functionally, cell wall formation. The sequence is that of D-alanine--D-alanine ligase from Haemophilus influenzae (strain 86-028NP).